Here is a 620-residue protein sequence, read N- to C-terminus: MDSHTLLQALIYLGSAALIVPIAVRLGLGSVLGYLIAGCIIGPWGLRLVTDAESILHFAEIGVVLMLFVIGLELDPQRLWKLRASVFGGGALQMVVCGGLIGLFCMFLGLRWQVAELIGMTLALSSTAIAMQAMNERNLTVSQVGRSAFAVLLFQDIAAIPLVAMIPLLAASGASTTLGAFALSALKVAGALALVVLLGRYVTRPALRFVARSGLREVFSAVALFLVFGFGLLLEEVGLSMAMGAFLAGVLLASSEYRHALESDIEPFKGLLLGLFFIGVGMSIDFGTLVENPLRILLLLAGFLAIKIVMLWLVARPLGVPAKQRRWFAVLLGQGSEFAFVVFGAAQMADVLEPEWAKALTLAVALSMAATPIFLVLLTRMEKTATGEAREADEIDEEQPRVIVAGFGRFGQIAGRLLLSSGVKMVVLDHDPDHIETLRKFGMKVFYGDATRMDLLESAGAAKAEVLINAIDDPQTNLQLSELVKSHFPHLQIIARARDVDHYIRLRQAGVAMPERETFEGALKSGRQALEALGLGRYEARERADLFRHFNTRMVEEMAKGENDPLSRAAAYKRTSAMLSEIITEDREHLSLIQRHGWQGTAEGKHSGEAADEPEVKPSI.

12 helical membrane passes run 4 to 24 (HTLL…PIAV), 26 to 46 (LGLG…PWGL), 54 to 74 (SILH…GLEL), 90 to 110 (GALQ…FLGL), 114 to 134 (VAEL…MQAM), 149 to 169 (FAVL…IPLL), 178 to 198 (LGAF…VVLL), 218 to 238 (VFSA…EEVG), 270 to 290 (GLLL…GTLV), 294 to 314 (LRIL…LWLV), 327 to 347 (WFAV…GAAQ), and 359 to 379 (ALTL…VLLT). Positions 399-518 (QPRVIVAGFG…AGVAMPERET (120 aa)) constitute an RCK N-terminal domain. Positions 599 to 620 (QGTAEGKHSGEAADEPEVKPSI) are disordered.

This sequence belongs to the monovalent cation:proton antiporter 2 (CPA2) transporter (TC 2.A.37) family. KefC subfamily. As to quaternary structure, homodimer. Interacts with the regulatory subunit KefF.

The protein resides in the cell inner membrane. Pore-forming subunit of a potassium efflux system that confers protection against electrophiles. Catalyzes K(+)/H(+) antiport. The protein is Glutathione-regulated potassium-efflux system protein KefC of Salmonella dublin (strain CT_02021853).